A 190-amino-acid polypeptide reads, in one-letter code: DNA dC-&gt;dU-editing enzyme APOBEC-3C (190 aa).

A CMP/dCMP-type deaminase domain is found at 29 to 138 (DRNETWLCFT…TDYQEGLRSL (110 aa)). H66, C97, and C100 together coordinate Zn(2+).

Belongs to the cytidine and deoxycytidylate deaminase family. As to quaternary structure, homodimer. Interacts with TRIB3. It depends on Zn(2+) as a cofactor.

Its subcellular location is the nucleus. It is found in the cytoplasm. It carries out the reaction a 2'-deoxycytidine in single-stranded DNA + H2O + H(+) = a 2'-deoxyuridine in single-stranded DNA + NH4(+). Its function is as follows. DNA deaminase (cytidine deaminase) which acts as an inhibitor of retrovirus replication and retrotransposon mobility via deaminase-dependent and -independent mechanisms. May also play a role in the epigenetic regulation of gene expression through the process of active DNA demethylation. This is DNA dC-&gt;dU-editing enzyme APOBEC-3C (APOBEC3C) from Gorilla gorilla gorilla (Western lowland gorilla).